The primary structure comprises 474 residues: Bifunctional protein HldE (474 aa).

Positions 1 to 318 are ribokinase; the sequence is MKVTLPDFNK…ENAIRGRADN (318 aa). 195–198 contributes to the ATP binding site; it reads NMSE. Residue Asp264 is part of the active site. The cytidylyltransferase stretch occupies residues 344–474; it reads MTNGCFDILH…TNIINAIKKK (131 aa).

In the N-terminal section; belongs to the carbohydrate kinase PfkB family. The protein in the C-terminal section; belongs to the cytidylyltransferase family. In terms of assembly, homodimer.

It catalyses the reaction D-glycero-beta-D-manno-heptose 7-phosphate + ATP = D-glycero-beta-D-manno-heptose 1,7-bisphosphate + ADP + H(+). The enzyme catalyses D-glycero-beta-D-manno-heptose 1-phosphate + ATP + H(+) = ADP-D-glycero-beta-D-manno-heptose + diphosphate. It participates in nucleotide-sugar biosynthesis; ADP-L-glycero-beta-D-manno-heptose biosynthesis; ADP-L-glycero-beta-D-manno-heptose from D-glycero-beta-D-manno-heptose 7-phosphate: step 1/4. The protein operates within nucleotide-sugar biosynthesis; ADP-L-glycero-beta-D-manno-heptose biosynthesis; ADP-L-glycero-beta-D-manno-heptose from D-glycero-beta-D-manno-heptose 7-phosphate: step 3/4. In terms of biological role, catalyzes the phosphorylation of D-glycero-D-manno-heptose 7-phosphate at the C-1 position to selectively form D-glycero-beta-D-manno-heptose-1,7-bisphosphate. Catalyzes the ADP transfer from ATP to D-glycero-beta-D-manno-heptose 1-phosphate, yielding ADP-D-glycero-beta-D-manno-heptose. The sequence is that of Bifunctional protein HldE from Proteus mirabilis (strain HI4320).